Reading from the N-terminus, the 369-residue chain is Saccharopine dehydrogenase [NAD(+), L-lysine-forming] (369 aa).

L-saccharopine contacts are provided by R19 and K78. The Proton acceptor role is filled by K78. H96 serves as the catalytic Proton donor. Q101 lines the L-saccharopine pocket. R130 contacts NAD(+). The L-saccharopine site is built by R131 and F135. NAD(+) is bound by residues 203–204 (GR), D227, T231, Y251, and V278. C205 and C249 form a disulfide bridge. An L-saccharopine-binding site is contributed by 279 to 281 (SAD). An NAD(+)-binding site is contributed by 318-321 (IDHL).

It belongs to the AlaDH/PNT family. As to quaternary structure, monomer.

It carries out the reaction L-saccharopine + NAD(+) + H2O = L-lysine + 2-oxoglutarate + NADH + H(+). It functions in the pathway amino-acid biosynthesis; L-lysine biosynthesis via AAA pathway; L-lysine from L-alpha-aminoadipate (fungal route): step 3/3. Catalyzes the NAD(+)-dependent cleavage of saccharopine to L-lysine and 2-oxoglutarate, the final step in the alpha-aminoadipate (AAA) pathway for lysin biosynthesis. The chain is Saccharopine dehydrogenase [NAD(+), L-lysine-forming] from Yarrowia lipolytica (strain CLIB 122 / E 150) (Yeast).